Reading from the N-terminus, the 31-residue chain is AGTKEWLNKAKDFIKEKGLGMLSAAANAALN.

The protein belongs to the ponericin-G family. Expressed by the venom gland.

It localises to the secreted. Its subcellular location is the target cell membrane. Its function is as follows. Membrane-perturbating peptide with a few moderate activities. It is insecticidal, since it induces reversible paralysis in insects (L.cuprina) after 1 hour, but fails to kill them. It is also antiparasitic, since it moderately inhibits the larval development of the major pathogenic nematode of ruminants (H.contortus, IC(50)=23.2 uM) and reduces the motility of adult males of the other nematode B.malayi. It does not show antibacterial activity (MIC&gt;40 uM). It is not cytotoxic to HEK293 cells and does not induce hemolysis in human erythrocytes. It does not cause an increase in intracellular calcium concentration on neuronal and epithelial cell lines. The protein is M-poneritoxin-Nc3b of Neoponera commutata (Large hunting ant).